The chain runs to 240 residues: Thiopurine S-methyltransferase (240 aa).

24–35 (WKEKWVTRHISF) contributes to the S-adenosyl-L-methionine binding site. Phosphoserine is present on serine 34. Substrate is bound at residue phenylalanine 35. An N6-acetyllysine modification is found at lysine 53. Residues leucine 64, glutamate 85, 129-130 (SI), and arginine 147 each bind S-adenosyl-L-methionine.

This sequence belongs to the class I-like SAM-binding methyltransferase superfamily. TPMT family. Monomer.

The protein resides in the cytoplasm. It carries out the reaction S-adenosyl-L-methionine + a thiopurine = S-adenosyl-L-homocysteine + a thiopurine S-methylether.. The enzyme catalyses mercaptopurine + S-adenosyl-L-methionine = 6-methylthiopurine + S-adenosyl-L-homocysteine + H(+). Functionally, catalyzes the S-methylation of thiopurine drugs such as 6-mercaptopurine (also called mercaptopurine, 6-MP or its brand name Purinethol) using S-adenosyl-L-methionine as the methyl donor. TPMT activity modulates the cytotoxic effects of thiopurine prodrugs. A natural substrate for this enzyme has yet to be identified. The chain is Thiopurine S-methyltransferase (Tpmt) from Mus musculus (Mouse).